Here is a 619-residue protein sequence, read N- to C-terminus: Dihydroxy-acid dehydratase (619 aa).

Mg(2+) is bound at residue Asp81. Cys122 contributes to the [2Fe-2S] cluster binding site. Residues Asp123 and Lys124 each coordinate Mg(2+). Lys124 is subject to N6-carboxylysine. Cys198 lines the [2Fe-2S] cluster pocket. Glu494 provides a ligand contact to Mg(2+). Catalysis depends on Ser520, which acts as the Proton acceptor.

Belongs to the IlvD/Edd family. As to quaternary structure, homodimer. Requires [2Fe-2S] cluster as cofactor. The cofactor is Mg(2+).

It catalyses the reaction (2R)-2,3-dihydroxy-3-methylbutanoate = 3-methyl-2-oxobutanoate + H2O. The enzyme catalyses (2R,3R)-2,3-dihydroxy-3-methylpentanoate = (S)-3-methyl-2-oxopentanoate + H2O. It participates in amino-acid biosynthesis; L-isoleucine biosynthesis; L-isoleucine from 2-oxobutanoate: step 3/4. The protein operates within amino-acid biosynthesis; L-valine biosynthesis; L-valine from pyruvate: step 3/4. Functions in the biosynthesis of branched-chain amino acids. Catalyzes the dehydration of (2R,3R)-2,3-dihydroxy-3-methylpentanoate (2,3-dihydroxy-3-methylvalerate) into 2-oxo-3-methylpentanoate (2-oxo-3-methylvalerate) and of (2R)-2,3-dihydroxy-3-methylbutanoate (2,3-dihydroxyisovalerate) into 2-oxo-3-methylbutanoate (2-oxoisovalerate), the penultimate precursor to L-isoleucine and L-valine, respectively. The sequence is that of Dihydroxy-acid dehydratase from Neisseria gonorrhoeae (strain ATCC 700825 / FA 1090).